The sequence spans 456 residues: UDP-N-acetylmuramoylalanine--D-glutamate ligase (456 aa).

An ATP-binding site is contributed by 122–128 (GSNGKST).

Belongs to the MurCDEF family.

The protein localises to the cytoplasm. The enzyme catalyses UDP-N-acetyl-alpha-D-muramoyl-L-alanine + D-glutamate + ATP = UDP-N-acetyl-alpha-D-muramoyl-L-alanyl-D-glutamate + ADP + phosphate + H(+). The protein operates within cell wall biogenesis; peptidoglycan biosynthesis. Its function is as follows. Cell wall formation. Catalyzes the addition of glutamate to the nucleotide precursor UDP-N-acetylmuramoyl-L-alanine (UMA). This Saccharophagus degradans (strain 2-40 / ATCC 43961 / DSM 17024) protein is UDP-N-acetylmuramoylalanine--D-glutamate ligase.